The sequence spans 428 residues: Gamma-glutamyl phosphate reductase (428 aa).

The protein belongs to the gamma-glutamyl phosphate reductase family.

Its subcellular location is the cytoplasm. It carries out the reaction L-glutamate 5-semialdehyde + phosphate + NADP(+) = L-glutamyl 5-phosphate + NADPH + H(+). It functions in the pathway amino-acid biosynthesis; L-proline biosynthesis; L-glutamate 5-semialdehyde from L-glutamate: step 2/2. Its function is as follows. Catalyzes the NADPH-dependent reduction of L-glutamate 5-phosphate into L-glutamate 5-semialdehyde and phosphate. The product spontaneously undergoes cyclization to form 1-pyrroline-5-carboxylate. This chain is Gamma-glutamyl phosphate reductase, found in Streptomyces avermitilis (strain ATCC 31267 / DSM 46492 / JCM 5070 / NBRC 14893 / NCIMB 12804 / NRRL 8165 / MA-4680).